The following is a 313-amino-acid chain: MSGIDPKRFGKVAVLFGGESAEREVSLTSGRLVLQGLRDAGVDAHPFDPAERPLSALKDEGFVRAFNALHGGYGENGQIQGALDFYGIRYTGSGVLGSALGLDKFRTKLVWQQTGVPTPPFETVMRGDDLAARATDIVAKLGLPLFVKPASEGSSVAVLKVKTADALPAALAEAATHDKIVIVEKSIEGGGEYTACIAGDLDLPLIKIVPAGEFYDYHAKYVADDTQYLIPCGLPAEQEAELKRIARRAFAVLGCTDWGRADFMLDAAGNAYFLEVNTAPGMTDHSLPPKAARAVGIGYSELVVKVLSLTLND.

The 201-residue stretch at 108–308 (KLVWQQTGVP…YSELVVKVLS (201 aa)) folds into the ATP-grasp domain. 138–193 (VAKLGLPLFVKPASEGSSVAVLKVKTADALPAALAEAATHDKIVIVEKSIEGGGEY) is an ATP binding site. Residues aspartate 262, glutamate 275, and asparagine 277 each contribute to the Mg(2+) site.

Belongs to the D-alanine--D-alanine ligase family. It depends on Mg(2+) as a cofactor. Mn(2+) is required as a cofactor.

It localises to the cytoplasm. It carries out the reaction 2 D-alanine + ATP = D-alanyl-D-alanine + ADP + phosphate + H(+). It participates in cell wall biogenesis; peptidoglycan biosynthesis. Its function is as follows. Cell wall formation. This Burkholderia orbicola (strain MC0-3) protein is D-alanine--D-alanine ligase.